We begin with the raw amino-acid sequence, 655 residues long: MGIFSIANQHIRFAVKLATAIVLALFVGFHFQLETPRWAVLTAAIVAAGTAFAAGGEPYSGAIRYRGFLRIIGTFIGCIAGLVIIIAMIRAPLLMILVCCIWAGFCTWISSLVRIENSYAWGLAGYTALIIVITIQPEPLLTPQFAVERCSEIVIGIVCAIMADLLFSPRSIKQEVDRELESLLVAQYQLMQLCIKHGDGEVVDKAWGDLVRRTTALQGMRSNLNMESSRWARANRRLKAINTLSLTLITQSCETYLIQNTRPELITDTFREFFDTPVETAQDVHKQLKRLRRVIAWTGERETPVTIYSWVAAATRYQLLKRGVISNTKINATEEEILQGEPEVKVESAERHHAMVNFWRTTLSCILGTLFWLWTGWTSGSGAMVMIAVVTSLAMRLPNPRMVAIDFIYGTLAALPLGLLYFLVIIPNTQQSMLLLCISLAVLGFFLGIEVQKRRLGSMGALASTINIIVLDNPMTFHFSQFLDSALGQIVGCVLAFTVILLVRDKSRDRTGRVLLNQFVSAAVSAMTTNVARRKENHLPALYQQLFLLMNKFPGDLPKFRLALTMIIAHQRLRDAPIPVNEDLSAFHRQMRRTADHVISARSDDKRRRYFGQLLEELEIYQEKLRIWQAPPQVTEPVNRLAGMLHKYQHALTDS.

Over 1 to 12 the chain is Periplasmic; it reads MGIFSIANQHIR. The chain crosses the membrane as a helical span at residues 13–33; the sequence is FAVKLATAIVLALFVGFHFQL. The Cytoplasmic portion of the chain corresponds to 34–37; the sequence is ETPR. The chain crosses the membrane as a helical span at residues 38-58; it reads WAVLTAAIVAAGTAFAAGGEP. Residues 59–68 are Periplasmic-facing; it reads YSGAIRYRGF. Residues 69 to 89 form a helical membrane-spanning segment; the sequence is LRIIGTFIGCIAGLVIIIAMI. Topologically, residues 90-92 are cytoplasmic; the sequence is RAP. Residues 93–113 form a helical membrane-spanning segment; sequence LLMILVCCIWAGFCTWISSLV. The Periplasmic portion of the chain corresponds to 114 to 120; the sequence is RIENSYA. The chain crosses the membrane as a helical span at residues 121 to 141; the sequence is WGLAGYTALIIVITIQPEPLL. At 142–151 the chain is on the cytoplasmic side; it reads TPQFAVERCS. The chain crosses the membrane as a helical span at residues 152–172; the sequence is EIVIGIVCAIMADLLFSPRSI. Residues 173–369 lie on the Periplasmic side of the membrane; it reads KQEVDRELES…RTTLSCILGT (197 aa). A helical membrane pass occupies residues 370–390; that stretch reads LFWLWTGWTSGSGAMVMIAVV. The Cytoplasmic portion of the chain corresponds to 391-406; it reads TSLAMRLPNPRMVAID. The helical transmembrane segment at 407 to 427 threads the bilayer; sequence FIYGTLAALPLGLLYFLVIIP. At 428–430 the chain is on the periplasmic side; it reads NTQ. A helical transmembrane segment spans residues 431 to 451; that stretch reads QSMLLLCISLAVLGFFLGIEV. The Cytoplasmic portion of the chain corresponds to 452 to 458; the sequence is QKRRLGS. Residues 459-479 form a helical membrane-spanning segment; sequence MGALASTINIIVLDNPMTFHF. Over 480 to 481 the chain is Periplasmic; sequence SQ. A helical membrane pass occupies residues 482–502; the sequence is FLDSALGQIVGCVLAFTVILL. The Cytoplasmic portion of the chain corresponds to 503-655; the sequence is VRDKSRDRTG…HKYQHALTDS (153 aa).

The protein belongs to the aromatic acid exporter ArAE (TC 2.A.85) family.

It is found in the cell inner membrane. Its function is as follows. Forms an efflux pump with AaeA. Could function as a metabolic relief valve, allowing to eliminate certain compounds when they accumulate to high levels in the cell. Substrates are p-hydroxybenzoic acid (pHBA), 6-hydroxy-2-naphthoic and 2-hydroxycinnamate. The chain is p-hydroxybenzoic acid efflux pump subunit AaeB from Escherichia coli (strain K12).